The primary structure comprises 393 residues: Probable acetyl-CoA acyltransferase (393 aa).

Catalysis depends on cysteine 88, which acts as the Acyl-thioester intermediate. Residues histidine 349 and cysteine 378 each act as proton acceptor in the active site.

This sequence belongs to the thiolase-like superfamily. Thiolase family.

The protein resides in the cytoplasm. The enzyme catalyses 2 acetyl-CoA = acetoacetyl-CoA + CoA. This chain is Probable acetyl-CoA acyltransferase, found in Staphylococcus aureus (strain NCTC 8325 / PS 47).